The chain runs to 325 residues: MKIFDYEDIQLIPNKCIVESRSECDTTIQFGPKKFKIPVVPANMQTVMNEKLAKWFAENDYFYIMHRFDEEARIPFIKHMQNSGLFASISVGVKKAEFDFIEKLAQEKLIPEYITIDIAHGHSDSVINMIKHIKTHIPDSFVIAGNVGTPEGVRELENAGADATKVGIGPGRVCITKIKTGFGTGGWQLAALNICSKAARKPLIADGGIRTHGDIAKSIRFGASMVMIGSLFAAHEESPGETVELDGKQYKEYFGSASEFQKGEHKNVEGKKMFVEHKGSLMDTLKEMQQDLQSSISYAGGKDLKSLRTVDYVIVRNSIFNGDRD.

The active-site Thioimidate intermediate is the Cys-174. An NADP(+)-binding site is contributed by 203 to 226 (LIADGGIRTHGDIAKSIRFGASMV).

Belongs to the IMPDH/GMPR family. GuaC type 2 subfamily.

The catalysed reaction is IMP + NH4(+) + NADP(+) = GMP + NADPH + 2 H(+). In terms of biological role, catalyzes the irreversible NADPH-dependent deamination of GMP to IMP. It functions in the conversion of nucleobase, nucleoside and nucleotide derivatives of G to A nucleotides, and in maintaining the intracellular balance of A and G nucleotides. The sequence is that of GMP reductase from Staphylococcus aureus (strain bovine RF122 / ET3-1).